A 346-amino-acid chain; its full sequence is UDP-3-O-acylglucosamine N-acyltransferase (346 aa).

H253 serves as the catalytic Proton acceptor.

Belongs to the transferase hexapeptide repeat family. LpxD subfamily. In terms of assembly, homotrimer.

The catalysed reaction is a UDP-3-O-[(3R)-3-hydroxyacyl]-alpha-D-glucosamine + a (3R)-hydroxyacyl-[ACP] = a UDP-2-N,3-O-bis[(3R)-3-hydroxyacyl]-alpha-D-glucosamine + holo-[ACP] + H(+). Its pathway is bacterial outer membrane biogenesis; LPS lipid A biosynthesis. Functionally, catalyzes the N-acylation of UDP-3-O-acylglucosamine using 3-hydroxyacyl-ACP as the acyl donor. Is involved in the biosynthesis of lipid A, a phosphorylated glycolipid that anchors the lipopolysaccharide to the outer membrane of the cell. This chain is UDP-3-O-acylglucosamine N-acyltransferase, found in Rickettsia prowazekii (strain Madrid E).